A 442-amino-acid chain; its full sequence is Histidinol dehydrogenase (442 aa).

NAD(+) is bound by residues Tyr-138, Gln-196, and Asn-219. Substrate-binding residues include Ser-245, Gln-267, and His-270. Gln-267 and His-270 together coordinate Zn(2+). Catalysis depends on proton acceptor residues Glu-334 and His-335. Positions 335, 368, 422, and 427 each coordinate substrate. Asp-368 contributes to the Zn(2+) binding site. His-427 provides a ligand contact to Zn(2+).

Belongs to the histidinol dehydrogenase family. Homodimer. Zn(2+) serves as cofactor.

It carries out the reaction L-histidinol + 2 NAD(+) + H2O = L-histidine + 2 NADH + 3 H(+). Its pathway is amino-acid biosynthesis; L-histidine biosynthesis; L-histidine from 5-phospho-alpha-D-ribose 1-diphosphate: step 9/9. In terms of biological role, catalyzes the sequential NAD-dependent oxidations of L-histidinol to L-histidinaldehyde and then to L-histidine. The polypeptide is Histidinol dehydrogenase (Pectobacterium atrosepticum (strain SCRI 1043 / ATCC BAA-672) (Erwinia carotovora subsp. atroseptica)).